The sequence spans 426 residues: Histidine--tRNA ligase (426 aa).

The protein belongs to the class-II aminoacyl-tRNA synthetase family. As to quaternary structure, homodimer.

The protein resides in the cytoplasm. It catalyses the reaction tRNA(His) + L-histidine + ATP = L-histidyl-tRNA(His) + AMP + diphosphate + H(+). The polypeptide is Histidine--tRNA ligase (Shewanella baltica (strain OS223)).